A 452-amino-acid chain; its full sequence is Probable glycine dehydrogenase (decarboxylating) subunit 1 (452 aa).

The protein belongs to the GcvP family. N-terminal subunit subfamily. As to quaternary structure, the glycine cleavage system is composed of four proteins: P, T, L and H. In this organism, the P 'protein' is a heterodimer of two subunits.

It carries out the reaction N(6)-[(R)-lipoyl]-L-lysyl-[glycine-cleavage complex H protein] + glycine + H(+) = N(6)-[(R)-S(8)-aminomethyldihydrolipoyl]-L-lysyl-[glycine-cleavage complex H protein] + CO2. The glycine cleavage system catalyzes the degradation of glycine. The P protein binds the alpha-amino group of glycine through its pyridoxal phosphate cofactor; CO(2) is released and the remaining methylamine moiety is then transferred to the lipoamide cofactor of the H protein. The protein is Probable glycine dehydrogenase (decarboxylating) subunit 1 of Nitrosospira multiformis (strain ATCC 25196 / NCIMB 11849 / C 71).